The chain runs to 142 residues: Large ribosomal subunit protein uL13 (142 aa).

This sequence belongs to the universal ribosomal protein uL13 family. In terms of assembly, part of the 50S ribosomal subunit.

In terms of biological role, this protein is one of the early assembly proteins of the 50S ribosomal subunit, although it is not seen to bind rRNA by itself. It is important during the early stages of 50S assembly. This is Large ribosomal subunit protein uL13 from Vibrio parahaemolyticus serotype O3:K6 (strain RIMD 2210633).